A 319-amino-acid chain; its full sequence is Cytochrome c biogenesis protein CcsA (319 aa).

8 consecutive transmembrane segments (helical) span residues 14 to 34 (AFGGLLIAMLVYWISLAFPGI), 36 to 56 (GLNRLATLITLLVNIALTLTL), 69 to 89 (SNLYESLLFLAWGLTFVHLFI), 97 to 117 (LIGATAIPVAMFVTAFASLAL), 142 to 162 (IMMLSYAILILGSLLSILFLI), 227 to 247 (TIGLGFPLLTIGIIAGAVWAN), 254 to 274 (WSWDPKETWALITWLIFAAYL), and 288 to 308 (AILASLGFLVVWICYLGVNFL).

The protein belongs to the CcmF/CycK/Ccl1/NrfE/CcsA family. May interact with Ccs1.

The protein localises to the plastid. It is found in the chloroplast thylakoid membrane. Required during biogenesis of c-type cytochromes (cytochrome c6 and cytochrome f) at the step of heme attachment. The sequence is that of Cytochrome c biogenesis protein CcsA from Pyropia yezoensis (Susabi-nori).